A 1574-amino-acid polypeptide reads, in one-letter code: Synaptojanin-1 (1574 aa).

The SAC domain occupies 119 to 442 (VRKVLNSGNF…GDSISKIYAG (324 aa)). Phosphoserine is present on residues S820 and S830. An RRM domain is found at 894–971 (GTVLVSIKSS…RTITITLKSP (78 aa)). Low complexity predominate over residues 1029-1054 (HLQPSSSSGLGTSPSSSPRTSPCQSP). The interval 1029–1327 (HLQPSSSSGL…GVKQEPTLKS (299 aa)) is disordered. S1053 carries the phosphoserine modification. Positions 1080–1100 (SSQGSPVDTQPAAQKDSSQTL) are enriched in polar residues. The segment covering 1105–1127 (PPPPRPVAPPARPAPPQRPPPPS) has biased composition (pro residues). Phosphoserine is present on residues S1147 and S1175. R1198 bears the Omega-N-methylarginine mark. T1217 carries the post-translational modification Phosphothreonine. Over residues 1268–1287 (TMPPSGPQPNLETPPQPPPR) the composition is skewed to pro residues. The span at 1288–1307 (SRSSQSLPSDSSPQLQQEQP) shows a compositional bias: low complexity. Phosphoserine is present on residues S1290 and S1350. Position 1354 is a phosphothreonine (T1354). Disordered stretches follow at residues 1363–1507 (LPSA…SVCP) and 1532–1574 (LPAR…FTER). Composition is skewed to polar residues over residues 1364–1379 (PSAS…SVSC), 1393–1402 (QESMGSSANP), 1424–1436 (RVQS…TSWL), and 1472–1484 (DLQS…TSNP). The segment at 1403 to 1425 (FPSLPCRNPFTDRTAAPGNPFRV) is 3 X 3 AA repeats of N-P-F. Residues 1535–1548 (RRPPPPPPPVPLLP) are compositionally biased toward pro residues. Residues 1549–1563 (PGTTSSAGPSTTLPS) are compositionally biased toward low complexity. The span at 1565-1574 (APSTLDFTER) shows a compositional bias: polar residues.

Belongs to the synaptojanin family. It in the central section; belongs to the inositol 1,4,5-trisphosphate 5-phosphatase family. In terms of assembly, interacts with ASH/GRB2. Interacts with PACSIN1, PACSIN2 and PACSIN3. Interacts with AMPH, SH3GL1, SH3GL2 and SH3GL3. Interacts with MYO1E (via SH3 domain). Interacts with BIN1 and DNM1. Interacts with EPS15.

The protein localises to the cytoplasm. It is found in the perinuclear region. The catalysed reaction is a 1,2-diacyl-sn-glycero-3-phospho-(1D-myo-inositol-4,5-bisphosphate) + H2O = a 1,2-diacyl-sn-glycero-3-phospho-(1D-myo-inositol 4-phosphate) + phosphate. In terms of biological role, phosphatase that acts on various phosphoinositides, including phosphatidylinositol 4-phosphate, phosphatidylinositol (4,5)-bisphosphate and phosphatidylinositol (3,4,5)-trisphosphate. Has a role in clathrin-mediated endocytosis. Hydrolyzes PIP2 bound to actin regulatory proteins resulting in the rearrangement of actin filaments downstream of tyrosine kinase and ASH/GRB2. The polypeptide is Synaptojanin-1 (Synj1) (Mus musculus (Mouse)).